Reading from the N-terminus, the 259-residue chain is Ribonuclease HII (259 aa).

One can recognise an RNase H type-2 domain in the interval 70-258; sequence TLIAGIDEVG…VKSLVLGKKE (189 aa). A divalent metal cation is bound by residues Asp76, Glu77, and Asp168.

This sequence belongs to the RNase HII family. It depends on Mn(2+) as a cofactor. The cofactor is Mg(2+).

It localises to the cytoplasm. The catalysed reaction is Endonucleolytic cleavage to 5'-phosphomonoester.. Endonuclease that specifically degrades the RNA of RNA-DNA hybrids. The chain is Ribonuclease HII from Streptococcus pneumoniae serotype 19F (strain G54).